Reading from the N-terminus, the 607-residue chain is Pescadillo homolog (607 aa).

The tract at residues 301–341 is disordered; it reads ANVVEQSEKTTEDADEEPETEENLDEFKPADGADNEDSKSL. Residues 313–324 are compositionally biased toward acidic residues; it reads DADEEPETEENL. Residues 325–339 are compositionally biased toward basic and acidic residues; sequence DEFKPADGADNEDSK. The BRCT domain occupies 348–441; it reads SNTSLFSNFT…ILERTDLYAC (94 aa). A coiled-coil region spans residues 497–604; the sequence is ENVEQIDDAE…RDIEKRKKLK (108 aa). Residues 531 to 607 form a disordered region; it reads QNSKSAKKTK…EKRKKLKVEN (77 aa). Basic and acidic residues-rich tracts occupy residues 544 to 561 and 595 to 607; these read RDTL…KELS and RDIE…KVEN.

Belongs to the pescadillo family. Component of the NOP7 complex, composed of erb1/SPBC4F6.13c, ppp1/SPBC19F5.05c and ytm1/SPAC890.04c. Within the NOP7 complex erb1/SPBC4F6.13c appears to interact directly with ppp1/SPBC19F5.05c and ytm1/SPAC890.04c. The NOP7 complex also associates with the 66S pre-ribosome.

The protein resides in the nucleus. It is found in the nucleoplasm. The protein localises to the nucleolus. Functionally, component of the NOP7 complex, which is required for maturation of the 25S and 5.8S ribosomal RNAs and formation of the 60S ribosome. This Schizosaccharomyces pombe (strain 972 / ATCC 24843) (Fission yeast) protein is Pescadillo homolog (ppp1).